We begin with the raw amino-acid sequence, 71 residues long: UPF0346 protein MGAS2096_Spy0401 (71 aa).

This sequence belongs to the UPF0346 family.

This is UPF0346 protein MGAS2096_Spy0401 from Streptococcus pyogenes serotype M12 (strain MGAS2096).